The primary structure comprises 128 residues: Transcription antitermination protein NusB (128 aa).

It belongs to the NusB family.

Functionally, involved in transcription antitermination. Required for transcription of ribosomal RNA (rRNA) genes. Binds specifically to the boxA antiterminator sequence of the ribosomal RNA (rrn) operons. The chain is Transcription antitermination protein NusB from Listeria monocytogenes serotype 4a (strain HCC23).